Reading from the N-terminus, the 442-residue chain is Probable serine/threonine-protein kinase kinase DDB_G0280643 (442 aa).

In terms of domain architecture, Protein kinase spans 74–398; the sequence is IDPNTIVDCG…VNEILESPYF (325 aa). Residues 80–88 and Lys-103 each bind ATP; that span reads VDCGTNGIM. The Proton acceptor role is filled by Asp-231.

Belongs to the protein kinase superfamily. CMGC Ser/Thr protein kinase family. MAP kinase subfamily.

It carries out the reaction L-seryl-[protein] + ATP = O-phospho-L-seryl-[protein] + ADP + H(+). It catalyses the reaction L-threonyl-[protein] + ATP = O-phospho-L-threonyl-[protein] + ADP + H(+). This is Probable serine/threonine-protein kinase kinase DDB_G0280643 from Dictyostelium discoideum (Social amoeba).